We begin with the raw amino-acid sequence, 93 residues long: Cobalt transport protein CbiN (93 aa).

2 helical membrane passes run L5–G25 and L63–C83.

This sequence belongs to the CbiN family. Forms an energy-coupling factor (ECF) transporter complex composed of an ATP-binding protein (A component, CbiO), a transmembrane protein (T component, CbiQ) and 2 possible substrate-capture proteins (S components, CbiM and CbiN) of unknown stoichimetry.

It is found in the cell inner membrane. It functions in the pathway cofactor biosynthesis; adenosylcobalamin biosynthesis. In terms of biological role, part of the energy-coupling factor (ECF) transporter complex CbiMNOQ involved in cobalt import. The polypeptide is Cobalt transport protein CbiN (Salmonella choleraesuis (strain SC-B67)).